Consider the following 323-residue polypeptide: Ribose-phosphate pyrophosphokinase (323 aa).

Residues 38-40 (DGE) and 96-97 (RQ) contribute to the ATP site. Mg(2+) contacts are provided by His130 and Asp170. The active site involves Lys193. D-ribose 5-phosphate is bound by residues Arg195, Asp219, and 223-227 (DTAGT).

The protein belongs to the ribose-phosphate pyrophosphokinase family. Class I subfamily. As to quaternary structure, homohexamer. Mg(2+) is required as a cofactor.

It is found in the cytoplasm. It catalyses the reaction D-ribose 5-phosphate + ATP = 5-phospho-alpha-D-ribose 1-diphosphate + AMP + H(+). It participates in metabolic intermediate biosynthesis; 5-phospho-alpha-D-ribose 1-diphosphate biosynthesis; 5-phospho-alpha-D-ribose 1-diphosphate from D-ribose 5-phosphate (route I): step 1/1. Involved in the biosynthesis of the central metabolite phospho-alpha-D-ribosyl-1-pyrophosphate (PRPP) via the transfer of pyrophosphoryl group from ATP to 1-hydroxyl of ribose-5-phosphate (Rib-5-P). The protein is Ribose-phosphate pyrophosphokinase of Chlorobaculum tepidum (strain ATCC 49652 / DSM 12025 / NBRC 103806 / TLS) (Chlorobium tepidum).